Reading from the N-terminus, the 318-residue chain is Strigolactone esterase D14 (318 aa).

A compositionally biased stretch (pro residues) spans 1–11 (MLRSTHPPPSS). Residues 1 to 48 (MLRSTHPPPSSPSSSSSGGGGGGGSSASSSSEKTMVGGGGGGGGGSGS) are disordered. Residues 36-47 (VGGGGGGGGGSG) are compositionally biased toward gly residues. Residue Ser-147 is the Nucleophile of the active site. Residues Ser-147 and Cys-241 each contribute to the substrate site. Catalysis depends on residues Asp-268 and His-297. Residue His-297 participates in substrate binding.

This sequence belongs to the AB hydrolase superfamily. In terms of assembly, interacts with D53. The interaction between D53 and D14 is enhanced in the presence of strigolactones. The interaction with D53 occurs in the presence of (2'R) stereoisomers of strigolactones, but not (2'S) stereoisomers. Interacts with SLR1 in a strigolactone-dependent manner. Interacts with D3 in a strigolactone-dependent manner. Expressed in the parenchyma cells of the root stele and lateral roots, vascular tissues of vein and leaf sheath, ligule base, auricle base and stem base.

It localises to the cytoplasm. The protein localises to the nucleus. Involved in strigolactone (SL) signaling pathway. May function downstream of SL synthesis, as a component of hormone signaling or as an enzyme that participates in the conversion of SL to the bioactive form. Strigolactones are hormones that inhibit tillering and shoot branching through the MAX-dependent pathway, contribute to the regulation of shoot architectural response to phosphate-limiting conditions and function as rhizosphere signal that stimulates hyphal branching of arbuscular mycorrhizal fungi and trigger seed germination of root parasitic weeds. Strigolactone-dependent association of D14 with D3 and D53 (a repressor of SL signaling) triggers D53 ubiquitination and degradation. Hydrolyzes the butenolide ring of SLs. A reaction product D-OH is trapped in the cavity of D14, inducing the interaction with SLR1, and probably with other proteins such as D3 and D53. Contributes to the negative regulation of gibberellin signaling. In Oryza sativa subsp. japonica (Rice), this protein is Strigolactone esterase D14.